The chain runs to 304 residues: Acetyl-coenzyme A carboxylase carboxyl transferase subunit beta (304 aa).

A CoA carboxyltransferase N-terminal domain is found at 23–292 (VWTKCDSCGQ…PNPEAPREGV (270 aa)). Zn(2+) is bound by residues C27, C30, C46, and C49. The C4-type zinc-finger motif lies at 27 to 49 (CDSCGQVLYRAELERNLEVCPKC). A disordered region spans residues 285-304 (PEAPREGVVVPPVPDQEPEA). Over residues 295–304 (PPVPDQEPEA) the composition is skewed to pro residues.

It belongs to the AccD/PCCB family. As to quaternary structure, acetyl-CoA carboxylase is a heterohexamer composed of biotin carboxyl carrier protein (AccB), biotin carboxylase (AccC) and two subunits each of ACCase subunit alpha (AccA) and ACCase subunit beta (AccD). It depends on Zn(2+) as a cofactor.

Its subcellular location is the cytoplasm. The catalysed reaction is N(6)-carboxybiotinyl-L-lysyl-[protein] + acetyl-CoA = N(6)-biotinyl-L-lysyl-[protein] + malonyl-CoA. Its pathway is lipid metabolism; malonyl-CoA biosynthesis; malonyl-CoA from acetyl-CoA: step 1/1. Component of the acetyl coenzyme A carboxylase (ACC) complex. Biotin carboxylase (BC) catalyzes the carboxylation of biotin on its carrier protein (BCCP) and then the CO(2) group is transferred by the transcarboxylase to acetyl-CoA to form malonyl-CoA. The chain is Acetyl-coenzyme A carboxylase carboxyl transferase subunit beta from Shigella sonnei (strain Ss046).